A 122-amino-acid chain; its full sequence is Large ribosomal subunit protein uL14 (122 aa).

It belongs to the universal ribosomal protein uL14 family. Part of the 50S ribosomal subunit. Forms a cluster with proteins L3 and L19. In the 70S ribosome, L14 and L19 interact and together make contacts with the 16S rRNA in bridges B5 and B8.

Functionally, binds to 23S rRNA. Forms part of two intersubunit bridges in the 70S ribosome. The polypeptide is Large ribosomal subunit protein uL14 (Neisseria meningitidis serogroup C (strain 053442)).